Here is a 505-residue protein sequence, read N- to C-terminus: MAKQPTALIILDGFANRESEHGNAVKQAHKPNFDRYYSKYPTTQIEASGLDVGLPEGQMGNSEVGHMNIGAGRIVYQSLTRINKSIADGDFFENDVLNNAVQHVNEHDSALHVFGLLSDGGVHSHYQHLFALLELAKQKGLDKVYVHAFLDGRDVDQKSALKYIEETEAKFKSLGVGEFASISGRYYAMDRDKRWDREQKAYNAIRNFEGPAYASAKEGVEANYANDLTDEFVEPFIVEGQNNGINDGDAVIFFNFRPDRAAQLSEVFTNKAFDGFKVEQVKDLFYATFTKYNDNVDTEVVFEKVDLTNTIGEVAQNNNLKQLRIAETEKYPHVTYFMSGGRNEEFEGERRRLIDSPKVATYDLKPEMSAYEVKDALLEELDKGDLDLIILNFANPDMVGHSGMLEPTIKAIEAVDECLGEVVDKILDMNGYAIITADHGNSDQVLTDDDQPMTTHTTNPVPVIVTKEGVTLRETGRLGDLAPTLLDLLNVGQPSDMTGESLIKH.

Positions 12 and 62 each coordinate Mn(2+). The Phosphoserine intermediate role is filled by serine 62. Substrate is bound by residues histidine 123, arginine 153–aspartate 154, arginine 185, arginine 191, arginine 257–arginine 260, and lysine 330. 5 residues coordinate Mn(2+): aspartate 397, histidine 401, aspartate 438, histidine 439, and histidine 456.

It belongs to the BPG-independent phosphoglycerate mutase family. In terms of assembly, monomer. Requires Mn(2+) as cofactor.

The catalysed reaction is (2R)-2-phosphoglycerate = (2R)-3-phosphoglycerate. It participates in carbohydrate degradation; glycolysis; pyruvate from D-glyceraldehyde 3-phosphate: step 3/5. Functionally, catalyzes the interconversion of 2-phosphoglycerate and 3-phosphoglycerate. The protein is 2,3-bisphosphoglycerate-independent phosphoglycerate mutase of Staphylococcus haemolyticus (strain JCSC1435).